Consider the following 186-residue polypeptide: Ran guanine nucleotide release factor (186 aa).

The segment at 27–70 (DLRPVPDNQEVFCHPVTDQSLIVELLELQAHVRGEAAARYHFED) is interaction with RAN.

This sequence belongs to the MOG1 family. As to quaternary structure, monomer. Interacts with RAN, both RAN-GTP and RAN-GDP. Competes with RCC1 for a common binding site on RAN and thereby inhibits RCC1-mediated nucleotide exchange. Forms a complex with RAN-GTP and RANBP1. Interacts with the cytoplasmic loop 2 of SCN5A. In terms of tissue distribution, isoform 1 and isoform 2 are ubiquitously expressed. Detected in heart and brain.

It is found in the nucleus. The protein localises to the cytoplasm. It localises to the perinuclear region. Its subcellular location is the cell membrane. May regulate the intracellular trafficking of RAN. Promotes guanine nucleotide release from RAN and inhibits binding of new GTP by preventing the binding of the RAN guanine nucleotide exchange factor RCC1. Regulates the levels of GTP-bound RAN in the nucleus, and thereby plays a role in the regulation of RAN-dependent mitotic spindle dynamics. Enhances the expression of SCN5A at the cell membrane in cardiomyocytes. In Homo sapiens (Human), this protein is Ran guanine nucleotide release factor (RANGRF).